The chain runs to 101 residues: uncharacterized protein (101 aa).

The first 25 residues, M1 to A25, serve as a signal peptide directing secretion. A lipid anchor (N-palmitoyl cysteine) is attached at C26. Residue C26 is the site of S-diacylglycerol cysteine attachment.

Belongs to the MG439/MG440 family.

The protein resides in the cell membrane. This is an uncharacterized protein from Mycoplasma pneumoniae (strain ATCC 29342 / M129 / Subtype 1) (Mycoplasmoides pneumoniae).